The following is a 471-amino-acid chain: Nuclear receptor subfamily 0 group B member 1 (471 aa).

Repeat copies occupy residues 1–67 (MAGE…YRCC), 68–134 (FCGE…YRCC), and 135–201 (FCGE…YRCC). The interval 1–253 (MAGEDHQWQG…QRVALKSPQV (253 aa)) is 4 X 67 AA tandem repeats. 3 consecutive short sequence motifs (LXXLL motif) follow at residues 13-17 (LYNML), 80-84 (LYNML), and 147-151 (LYSLL). A 4; truncated repeat occupies 202 to 253 (FCGEDHPRQSGILCNMPMSAKQTHVAPEAQPGAPWWDPSCAAQRVALKSPQV). The region spanning 210–470 (QSGILCNMPM…DMMLEMLCAK (261 aa)) is the NR LBD domain. The AF-2 motif motif lies at 462-467 (MMLEML).

Belongs to the nuclear hormone receptor family. NR0 subfamily. In terms of assembly, homodimer. Interacts with NR5A1, NR5A2, NR0B2 and with COPS2. Interacts with ESRRB; represses ESRRB activity at the GATA6 promoter.

Its subcellular location is the nucleus. It localises to the cytoplasm. Nuclear receptor that lacks a DNA-binding domain and acts as a corepressor that inhibits the transcriptional activity of other nuclear receptors through heterodimeric interactions. Component of a cascade required for the development of the hypothalamic-pituitary-adrenal-gonadal axis. May also have a role in the development of the embryo and in the maintenance of embryonic stem cell pluripotency. This Sus scrofa (Pig) protein is Nuclear receptor subfamily 0 group B member 1 (NR0B1).